The sequence spans 406 residues: Cytochrome bc1 complex Rieske iron-sulfur subunit (406 aa).

Transmembrane regions (helical) follow at residues 56 to 76 (VGIW…VYLF), 98 to 118 (LLGL…IFYI), and 166 to 186 (MLGI…GGMV). The region spanning 291-388 (HGPRNAVMLI…ITVDEEGYLV (98 aa)) is the Rieske domain. [2Fe-2S] cluster contacts are provided by cysteine 331, histidine 333, cysteine 350, and histidine 353. A disulfide bridge connects residues cysteine 336 and cysteine 352.

It belongs to the Rieske iron-sulfur protein family. In terms of assembly, the cytochrome bc1 complex is composed of a cytochrome b (QcrB), the Rieske iron-sulfur protein (QcrA) and a diheme cytochrome c (QcrC) subunit. The bc1 complex forms a supercomplex with cytochrome c oxidase (cytochrome aa3). [2Fe-2S] cluster is required as a cofactor.

The protein resides in the cell membrane. In terms of biological role, iron-sulfur subunit of the cytochrome bc1 complex, an essential component of the respiratory electron transport chain required for ATP synthesis. The bc1 complex catalyzes the oxidation of menaquinol and the reduction of cytochrome c in the respiratory chain. The bc1 complex operates through a Q-cycle mechanism that couples electron transfer to generation of the proton gradient that drives ATP synthesis. This Corynebacterium diphtheriae (strain ATCC 700971 / NCTC 13129 / Biotype gravis) protein is Cytochrome bc1 complex Rieske iron-sulfur subunit (qcrA).